A 38-amino-acid polypeptide reads, in one-letter code: Large ribosomal subunit protein bL36A (38 aa).

This sequence belongs to the bacterial ribosomal protein bL36 family.

The polypeptide is Large ribosomal subunit protein bL36A (Pectobacterium atrosepticum (strain SCRI 1043 / ATCC BAA-672) (Erwinia carotovora subsp. atroseptica)).